Consider the following 256-residue polypeptide: 5-keto-4-deoxy-D-glucarate aldolase (256 aa).

H50 functions as the Proton acceptor in the catalytic mechanism. Q151 is a substrate binding site. Mg(2+) is bound at residue E153. Substrate-binding residues include S178 and D179. A Mg(2+)-binding site is contributed by D179.

Belongs to the HpcH/HpaI aldolase family. KDGluc aldolase subfamily. In terms of assembly, homohexamer; trimer of dimers. It depends on Mg(2+) as a cofactor.

The catalysed reaction is 5-dehydro-4-deoxy-D-glucarate = 2-hydroxy-3-oxopropanoate + pyruvate. The enzyme catalyses 2-dehydro-3-deoxy-D-glucarate = 2-hydroxy-3-oxopropanoate + pyruvate. It functions in the pathway carbohydrate acid metabolism; galactarate degradation; D-glycerate from galactarate: step 2/3. In terms of biological role, catalyzes the reversible retro-aldol cleavage of both 5-keto-4-deoxy-D-glucarate and 2-keto-3-deoxy-D-glucarate to pyruvate and tartronic semialdehyde. This Salmonella gallinarum (strain 287/91 / NCTC 13346) protein is 5-keto-4-deoxy-D-glucarate aldolase.